Consider the following 454-residue polypeptide: UDP-N-acetylmuramoylalanine--D-glutamate ligase (454 aa).

117 to 123 (GTNGKTT) contacts ATP.

The protein belongs to the MurCDEF family.

It is found in the cytoplasm. The enzyme catalyses UDP-N-acetyl-alpha-D-muramoyl-L-alanine + D-glutamate + ATP = UDP-N-acetyl-alpha-D-muramoyl-L-alanyl-D-glutamate + ADP + phosphate + H(+). It functions in the pathway cell wall biogenesis; peptidoglycan biosynthesis. Functionally, cell wall formation. Catalyzes the addition of glutamate to the nucleotide precursor UDP-N-acetylmuramoyl-L-alanine (UMA). The polypeptide is UDP-N-acetylmuramoylalanine--D-glutamate ligase (Alkaliphilus oremlandii (strain OhILAs) (Clostridium oremlandii (strain OhILAs))).